The sequence spans 332 residues: Protein FAM9A (332 aa).

Residues 1–13 (MEPVGRKRSRKAA) show a composition bias toward basic residues. 2 disordered regions span residues 1–114 (MEPV…EHTG) and 186–293 (QKDD…PTGV). 2 stretches are compositionally biased toward basic and acidic residues: residues 74 to 91 (GKDPVRDECEERNPFTET) and 98 to 114 (DEHGEREPFAEKDEHTG). Low complexity predominate over residues 196 to 217 (AAAAAAEAAAAAEAAAAAAEVI). Residues 218-275 (VVEDEEEEEKEEEEEKEEEEEEGEEEGGGEEGEEGGGGGEGEETEEEEEEEEEEEEEE) show a composition bias toward acidic residues. Basic and acidic residues predominate over residues 276–285 (QIKAFQEKQK).

Belongs to the XLR/SYCP3 family. Expressed exclusively in testis.

The protein resides in the nucleus. The protein localises to the nucleolus. This chain is Protein FAM9A, found in Homo sapiens (Human).